The following is a 458-amino-acid chain: MNKANPKNTPSVVPKKVFIKTYGCQMNVYDSQRMTDSLSSKGYVATQTPNDADLILLNTCHIREKAAEKLYSDLGRLRVMRQARTLDKPLMIGVTGCVAQAEGNEILRRAPMVDLVIGPQMYHRLPDLLEQTKQGKKIVETDYPVEDKFAHLPPHNKRAVRKRGVSAFLTVQEGCDKFCTFCVVPYTRGAEISRSVEQITEEARQLIEAGVKEITLLGQNVNGWHGQIANGKTWRLGDLLYHLAKLDGLKRLRYTTSHPRDMDDSLIAAHRDLDILMPYLHLPVQSGSDRILKAMNRQHKSIHYLHLIEKIRTARPDIAFSGDFIVGFPGETDEDFEETVKLIKQVQYSSAYSFKYSPRPGTVGATMKNHVDEAVKDARLQHLQVLLLEQQNAFLRSKIGQTTDVLIEKVGRHSGQMVGRSPWLLPVVVDTEASTGTVMSIHIKNAGSNSFVGEIANV.

Positions 15-134 (KKVFIKTYGC…LPDLLEQTKQ (120 aa)) constitute an MTTase N-terminal domain. Residues C24, C60, C97, C175, C179, and C182 each contribute to the [4Fe-4S] cluster site. In terms of domain architecture, Radical SAM core spans 161–393 (RKRGVSAFLT…QVLLLEQQNA (233 aa)). The region spanning 396–457 (RSKIGQTTDV…SNSFVGEIAN (62 aa)) is the TRAM domain.

It belongs to the methylthiotransferase family. MiaB subfamily. In terms of assembly, monomer. [4Fe-4S] cluster is required as a cofactor.

The protein resides in the cytoplasm. The enzyme catalyses N(6)-dimethylallyladenosine(37) in tRNA + (sulfur carrier)-SH + AH2 + 2 S-adenosyl-L-methionine = 2-methylsulfanyl-N(6)-dimethylallyladenosine(37) in tRNA + (sulfur carrier)-H + 5'-deoxyadenosine + L-methionine + A + S-adenosyl-L-homocysteine + 2 H(+). In terms of biological role, catalyzes the methylthiolation of N6-(dimethylallyl)adenosine (i(6)A), leading to the formation of 2-methylthio-N6-(dimethylallyl)adenosine (ms(2)i(6)A) at position 37 in tRNAs that read codons beginning with uridine. The polypeptide is tRNA-2-methylthio-N(6)-dimethylallyladenosine synthase (Bartonella quintana (strain Toulouse) (Rochalimaea quintana)).